We begin with the raw amino-acid sequence, 94 residues long: Co-chaperonin GroES (94 aa).

Belongs to the GroES chaperonin family. As to quaternary structure, heptamer of 7 subunits arranged in a ring. Interacts with the chaperonin GroEL.

The protein resides in the cytoplasm. Its function is as follows. Together with the chaperonin GroEL, plays an essential role in assisting protein folding. The GroEL-GroES system forms a nano-cage that allows encapsulation of the non-native substrate proteins and provides a physical environment optimized to promote and accelerate protein folding. GroES binds to the apical surface of the GroEL ring, thereby capping the opening of the GroEL channel. The protein is Co-chaperonin GroES of Clostridium botulinum (strain Alaska E43 / Type E3).